The sequence spans 273 residues: MHTHTIFVISDGTGITAETFGTAIMAQFDTKSRLVRIPFVDTMDKVHQAVRQINHVAESESHKPIVFTTLVNQDMLDLIESQCKGKVFDMFGTFVRPLELELGQKSLHRVGRFADISESKEYLERMEAINYTLAHDDGQTHQDLTGADVILVGVSRSGKTPTSLYLAMQFGLKVANYPLIPEDFERKQLPPALVPSRKKLFGLTIDPQRLSSIRNERRPDSKYASLVNCRYEVAEAESMMRRSGIPWLSSTTKSIEEIATTILQEVLPQHLGH.

An ADP-binding site is contributed by 153-160; sequence GVSRSGKT.

This sequence belongs to the pyruvate, phosphate/water dikinase regulatory protein family. PSRP subfamily.

The enzyme catalyses [pyruvate, water dikinase] + ADP = [pyruvate, water dikinase]-phosphate + AMP + H(+). It catalyses the reaction [pyruvate, water dikinase]-phosphate + phosphate + H(+) = [pyruvate, water dikinase] + diphosphate. Functionally, bifunctional serine/threonine kinase and phosphorylase involved in the regulation of the phosphoenolpyruvate synthase (PEPS) by catalyzing its phosphorylation/dephosphorylation. The sequence is that of Putative phosphoenolpyruvate synthase regulatory protein from Delftia acidovorans (strain DSM 14801 / SPH-1).